The sequence spans 132 residues: Small ribosomal subunit protein uS8 (132 aa).

It belongs to the universal ribosomal protein uS8 family. As to quaternary structure, part of the 30S ribosomal subunit. Contacts proteins S5 and S12.

Its function is as follows. One of the primary rRNA binding proteins, it binds directly to 16S rRNA central domain where it helps coordinate assembly of the platform of the 30S subunit. The sequence is that of Small ribosomal subunit protein uS8 from Lactobacillus delbrueckii subsp. bulgaricus (strain ATCC BAA-365 / Lb-18).